The primary structure comprises 265 residues: HUWE1-associated protein modifying stress responses (265 aa).

3 disordered regions span residues 1 to 22, 140 to 173, and 194 to 219; these read MEEK…HWFS, GKAP…SVET, and ISMR…RRNG. Residues 147–172 are compositionally biased toward low complexity; sequence SSRAPPRLAMVSPSRSTPSETSSSVE.

Belongs to the HAPSTR1 family. In terms of assembly, oligomer.

It localises to the nucleus. The protein resides in the cytoplasm. In terms of biological role, acts as a central player within a network of stress response pathways promoting cellular adaptability. Functions as a negative regulator of TP53/P53 in the cellular response to telomere erosion and probably also DNA damage. This Danio rerio (Zebrafish) protein is HUWE1-associated protein modifying stress responses.